Here is a 299-residue protein sequence, read N- to C-terminus: Dihydroorotate dehydrogenase B (NAD(+)), catalytic subunit (299 aa).

Residues Ser19 and Lys43 to Ser44 contribute to the FMN site. Substrate contacts are provided by residues Lys43, Asn67–Leu71, and Asn121. FMN is bound at residue Asn121. Cys124 (nucleophile) is an active-site residue. Residues Lys159 and Ile185 each coordinate FMN. Residue Asn186–Thr187 participates in substrate binding. Residues Gly211, Gly237 to Gly238, and Gly259 to Thr260 contribute to the FMN site.

Belongs to the dihydroorotate dehydrogenase family. Type 1 subfamily. As to quaternary structure, heterotetramer of 2 PyrK and 2 PyrD type B subunits. FMN is required as a cofactor.

It is found in the cytoplasm. It carries out the reaction (S)-dihydroorotate + NAD(+) = orotate + NADH + H(+). It functions in the pathway pyrimidine metabolism; UMP biosynthesis via de novo pathway; orotate from (S)-dihydroorotate (NAD(+) route): step 1/1. Catalyzes the conversion of dihydroorotate to orotate with NAD(+) as electron acceptor. This Pyrococcus abyssi (strain GE5 / Orsay) protein is Dihydroorotate dehydrogenase B (NAD(+)), catalytic subunit (pyrD).